Reading from the N-terminus, the 596-residue chain is Proteasome-associated ATPase (596 aa).

A coiled-coil region spans residues 12–94 (SRWERETQDL…KEEIDRLAQP (83 aa)). An ATP-binding site is contributed by 280 to 285 (GCGKTL). Residues 595–596 (YL) form a docks into pockets in the proteasome alpha-ring region.

The protein belongs to the AAA ATPase family. As to quaternary structure, homohexamer. Assembles into a hexameric ring structure that caps the 20S proteasome core. Strongly interacts with the prokaryotic ubiquitin-like protein Pup through a hydrophobic interface; the interacting region of ARC lies in its N-terminal coiled-coil domain. There is one Pup binding site per ARC hexamer ring. Upon ATP-binding, the C-terminus of ARC interacts with the alpha-rings of the proteasome core, possibly by binding to the intersubunit pockets.

The protein operates within protein degradation; proteasomal Pup-dependent pathway. Functionally, ATPase which is responsible for recognizing, binding, unfolding and translocation of pupylated proteins into the bacterial 20S proteasome core particle. May be essential for opening the gate of the 20S proteasome via an interaction with its C-terminus, thereby allowing substrate entry and access to the site of proteolysis. Thus, the C-termini of the proteasomal ATPase may function like a 'key in a lock' to induce gate opening and therefore regulate proteolysis. In Stackebrandtia nassauensis (strain DSM 44728 / CIP 108903 / NRRL B-16338 / NBRC 102104 / LLR-40K-21), this protein is Proteasome-associated ATPase.